The chain runs to 283 residues: Orotidine 5'-phosphate decarboxylase (283 aa).

The active-site Proton donor is the lysine 97.

The protein belongs to the OMP decarboxylase family. Type 2 subfamily.

The enzyme catalyses orotidine 5'-phosphate + H(+) = UMP + CO2. Its pathway is pyrimidine metabolism; UMP biosynthesis via de novo pathway; UMP from orotate: step 2/2. The protein is Orotidine 5'-phosphate decarboxylase of Clostridium botulinum (strain Loch Maree / Type A3).